Here is a 259-residue protein sequence, read N- to C-terminus: MRDVQSERDERNVPLKHVGIKNLKYPVVVLDKKNKNQHTIAEINMYVDLPKDFRGTHMSRFLEVLNKFHLKIDPKNIKAILDDLKKTLKAQSASIEIMFPYFLQKKAPVTKIESYMEYKCGFKAYDTNEECEFYIVVEVPIQTLCPCSKEISKYNAHNQRALARIEVETSELIWFEDLIELAESSASVPLFTLLKRPDEKYVTEKAYENPKFVEDVARDIALSLKENKKIRWFKVEVESFESIHNHNAYACVNSDTMEV.

This sequence belongs to the GTP cyclohydrolase IV family.

The catalysed reaction is GTP + H2O = 7,8-dihydroneopterin 3'-triphosphate + formate + H(+). The protein operates within cofactor biosynthesis; 7,8-dihydroneopterin triphosphate biosynthesis; 7,8-dihydroneopterin triphosphate from GTP: step 1/1. Functionally, converts GTP to 7,8-dihydroneopterin triphosphate. This chain is GTP cyclohydrolase FolE2, found in Thermosipho africanus (strain TCF52B).